Consider the following 5875-residue polypeptide: Probable E3 ubiquitin-protein ligase DDB_G0283893 (5875 aa).

15 disordered regions span residues 17 to 64, 164 to 185, 232 to 276, 302 to 342, 642 to 693, 716 to 740, 1081 to 1101, 1291 to 1367, 1806 to 1851, 1952 to 1982, 2008 to 2036, 2109 to 2203, 2893 to 2930, 3083 to 3119, and 3195 to 3214; these read DNNN…QPPE, NNNN…QSNN, DSNN…TTTS, PSFK…CGNG, TTTT…SPPI, SIRS…TTNA, ITPT…TSIP, DGWE…KEST, QESE…SSPP, KKPS…KDEV, EDED…DDEE, KALK…TGSG, DSDD…TNDS, TSPS…SGSN, and LLPP…DNTN. A compositionally biased stretch (low complexity) spans 18–52; the sequence is NNNNNNNNNNNNNNNNNNNNNNNNNNNSNNNNNKN. The span at 237-249 shows a compositional bias: basic and acidic residues; that stretch reads DNKENKKEDKESS. Low complexity-rich tracts occupy residues 250-276, 317-333, and 642-656; these read KPIA…TTTS, TSTI…ITQP, and TTTT…TTTT. Residues 657–669 show a composition bias toward polar residues; it reads NESIPMETTRSST. Residues 670–693 show a composition bias toward low complexity; it reads PIPIVNNNNNNNDSKSNSKKSPPI. Residues 716–725 are compositionally biased toward polar residues; sequence SIRSSSNKVN. A compositionally biased stretch (low complexity) spans 728–740; sequence TPKSSTTTTTTNA. Residues 1297 to 1330 are compositionally biased toward acidic residues; the sequence is FNDDDDEEEDEEEEEEMDEDDSENDEDEDSEESE. Positions 1300–1328 form a coiled coil; it reads DDDEEEDEEEEEEMDEDDSENDEDEDSEE. Composition is skewed to low complexity over residues 1347–1363 and 1838–1851; these read TTTT…TATT and SNSS…SSPP. Residues 1963–1977 show a composition bias toward basic residues; it reads GGCHHSNHHHHHHHS. Residues 2042–2113 form a UBR-type zinc finger; it reads KVCTYTFTKN…KGNPCKALKP (72 aa). 2 stretches are compositionally biased toward low complexity: residues 2118–2168 and 2178–2203; these read PPKQ…TNTN and SSSS…TGSG. A compositionally biased stretch (acidic residues) spans 2893–2903; sequence DSDDSDDEFPT. Positions 2908–2917 are enriched in low complexity; sequence VTSSGLSTSA. A compositionally biased stretch (low complexity) spans 3201–3211; that stretch reads SSSNENVVDND. A ZZ-type zinc finger spans residues 3226–3280; it reads EVLFSCDLCNINPITGKRWNCSNCGDFDLCNQCYQNPEKDHPKDHIFKEFIIDEP. 8 residues coordinate Zn(2+): C3231, C3234, C3246, C3249, C3255, C3258, H3266, and H3270. Disordered stretches follow at residues 3282–3312, 3326–3359, and 3754–3776; these read KDGD…QDDS, LNNN…PTTN, and SSTS…SNDI. Composition is skewed to low complexity over residues 3295–3307 and 3327–3358; these read QQQK…LQQD and NNNN…TPTT. The UIM domain maps to 3313 to 3332; that stretch reads EYDEELKIAISMSLNNNNNN. Residues 3754–3763 show a composition bias toward polar residues; sequence SSTSQDTQQE. Residues 3764-3774 show a composition bias toward low complexity; that stretch reads SSNNNNNNNSN. Residues 4118 to 4146 adopt a coiled-coil conformation; that stretch reads IENQEDHKRAIQTIEKESENAHKKYQRLI. Over residues 4182 to 4222 the composition is skewed to low complexity; sequence NTSTNSTGSNNQSINSSSGNISTNSSSSSSSSFGISNQSSS. Disordered stretches follow at residues 4182–4237, 4295–4323, and 4616–4671; these read NTST…GGVI, FISG…RQCP, and KILS…FDND. Residues 4223-4236 show a composition bias toward gly residues; sequence GNGGGGVGSGGGGV. Residues 4308-4317 are compositionally biased toward low complexity; that stretch reads QQQQQQQQQQ. Residues 4585–4618 are a coiled coil; that stretch reads QIQQQIALQQQQIQQQIQQQQQQLNESVSGLKIL. 2 stretches are compositionally biased toward low complexity: residues 4619–4635 and 4645–4659; these read SPSS…ATGS and SSGS…ISSS. Residues 5357 to 5870 are UBR4 E3 catalytic module; the sequence is PALPFVLVLL…EYLLKLYKSV (514 aa). A HemiRING-type zinc finger spans residues 5476 to 5620; that stretch reads GFTCMVCREG…WVNLNNISRV (145 aa). Positions 5479, 5482, 5554, and 5557 each coordinate Zn(2+). In terms of domain architecture, UZI spans 5623–5870; that stretch reads PKFRILSHDL…EYLLKLYKSV (248 aa). Residues 5819-5846 adopt a coiled-coil conformation; sequence QVDVKELLNCFENELKEFQDEMEFFDDE.

Belongs to the UBR4 family.

It functions in the pathway protein modification; protein ubiquitination. In terms of biological role, probable E3 ubiquitin-protein ligase. The protein is Probable E3 ubiquitin-protein ligase DDB_G0283893 of Dictyostelium discoideum (Social amoeba).